We begin with the raw amino-acid sequence, 486 residues long: Cysteine--tRNA ligase (486 aa).

C30 lines the Zn(2+) pocket. The short motif at 32–42 is the 'HIGH' region element; the sequence is PTVYDRAHLGN. Residues C221, H246, and E250 each coordinate Zn(2+). The 'KMSKS' region motif lies at 279 to 283; it reads KMSKS. An ATP-binding site is contributed by K282.

The protein belongs to the class-I aminoacyl-tRNA synthetase family. Monomer. Zn(2+) is required as a cofactor.

It localises to the cytoplasm. The enzyme catalyses tRNA(Cys) + L-cysteine + ATP = L-cysteinyl-tRNA(Cys) + AMP + diphosphate. This Cereibacter sphaeroides (strain ATCC 17025 / ATH 2.4.3) (Rhodobacter sphaeroides) protein is Cysteine--tRNA ligase.